Here is a 339-residue protein sequence, read N- to C-terminus: Biotin synthase (339 aa).

The region spanning 55 to 282 is the Radical SAM core domain; it reads NAVQLSTLLS…KAVVRLSAGR (228 aa). The [4Fe-4S] cluster site is built by C70, C74, and C77. The [2Fe-2S] cluster site is built by C114, C145, C205, and R277.

Belongs to the radical SAM superfamily. Biotin synthase family. In terms of assembly, homodimer. It depends on [4Fe-4S] cluster as a cofactor. [2Fe-2S] cluster is required as a cofactor.

It catalyses the reaction (4R,5S)-dethiobiotin + (sulfur carrier)-SH + 2 reduced [2Fe-2S]-[ferredoxin] + 2 S-adenosyl-L-methionine = (sulfur carrier)-H + biotin + 2 5'-deoxyadenosine + 2 L-methionine + 2 oxidized [2Fe-2S]-[ferredoxin]. It participates in cofactor biosynthesis; biotin biosynthesis; biotin from 7,8-diaminononanoate: step 2/2. Its function is as follows. Catalyzes the conversion of dethiobiotin (DTB) to biotin by the insertion of a sulfur atom into dethiobiotin via a radical-based mechanism. This is Biotin synthase from Burkholderia ambifaria (strain ATCC BAA-244 / DSM 16087 / CCUG 44356 / LMG 19182 / AMMD) (Burkholderia cepacia (strain AMMD)).